Reading from the N-terminus, the 424-residue chain is Serine hydroxymethyltransferase (424 aa).

Residues leucine 118 and 122–124 contribute to the (6S)-5,6,7,8-tetrahydrofolate site; that span reads GHL. N6-(pyridoxal phosphate)lysine is present on lysine 227. (6S)-5,6,7,8-tetrahydrofolate contacts are provided by residues glutamate 243 and 351-353; that span reads SPF.

This sequence belongs to the SHMT family. As to quaternary structure, homodimer. Pyridoxal 5'-phosphate is required as a cofactor.

The protein resides in the cytoplasm. It catalyses the reaction (6R)-5,10-methylene-5,6,7,8-tetrahydrofolate + glycine + H2O = (6S)-5,6,7,8-tetrahydrofolate + L-serine. Its pathway is one-carbon metabolism; tetrahydrofolate interconversion. It participates in amino-acid biosynthesis; glycine biosynthesis; glycine from L-serine: step 1/1. Functionally, catalyzes the reversible interconversion of serine and glycine with tetrahydrofolate (THF) serving as the one-carbon carrier. This reaction serves as the major source of one-carbon groups required for the biosynthesis of purines, thymidylate, methionine, and other important biomolecules. Also exhibits THF-independent aldolase activity toward beta-hydroxyamino acids, producing glycine and aldehydes, via a retro-aldol mechanism. The sequence is that of Serine hydroxymethyltransferase from Thermosipho africanus (strain TCF52B).